The sequence spans 154 residues: Superoxide dismutase [Cu-Zn] (154 aa).

The Cu cation site is built by His-47, His-49, and His-64. Cys-58 and Cys-147 are oxidised to a cystine. 4 residues coordinate Zn(2+): His-64, His-72, His-81, and Asp-84. A Cu cation-binding site is contributed by His-121. Residue Arg-144 participates in substrate binding.

Belongs to the Cu-Zn superoxide dismutase family. In terms of assembly, homodimer. It depends on Cu cation as a cofactor. Zn(2+) serves as cofactor.

It localises to the cytoplasm. It catalyses the reaction 2 superoxide + 2 H(+) = H2O2 + O2. Functionally, destroys radicals which are normally produced within the cells and which are toxic to biological systems. This chain is Superoxide dismutase [Cu-Zn] (SOD1), found in Claviceps purpurea (strain 20.1) (Ergot fungus).